We begin with the raw amino-acid sequence, 2201 residues long: Genome polyprotein (2201 aa).

Residue Gly2 is the site of N-myristoyl glycine; by host attachment. Topologically, residues 2–1511 (GAQVSTQKTG…YVSRAFICLQ (1510 aa)) are cytoplasmic. The tract at residues 566–582 (KLQGDVEEAIERARCTV) is amphipathic alpha-helix. The short motif at 858 to 860 (RGD) is the Cell attachment site element. Active-site for protease 2A activity residues include His888 and Asp906. Residues Cys923 and Cys925 each coordinate Zn(2+). The active-site For protease 2A activity is the Cys977. 2 residues coordinate Zn(2+): Cys983 and His985. The tract at residues 1117-1189 (NDSWLKKFTE…EQSAPSQSDQ (73 aa)) is membrane-binding. The interval 1117–1255 (NDSWLKKFTE…SPGAGKSVAT (139 aa)) is oligomerization. The tract at residues 1138 to 1142 (AIKIQ) is RNA-binding. Residues 1221 to 1377 (EKKMSNYIQF…SMYSQNGKIN (157 aa)) form the SF3 helicase domain. 3 residues coordinate Zn(2+): Cys1385, Cys1397, and Cys1402. The C4-type; degenerate zinc-finger motif lies at 1385–1402 (CDEECCPVNFKKCCPLVC). Positions 1429–1436 (EYNHRHSV) are RNA-binding. Residues 1440-1445 (LEALFQ) are oligomerization. An intramembrane segment occupies 1512-1527 (AITTFVSVAGIIYIIY). At 1528–2201 (KLFAGFQGAY…TLRRKWLDSF (674 aa)) the chain is on the cytoplasmic side. The residue at position 1537 (Tyr1537) is an O-(5'-phospho-RNA)-tyrosine. Residues 1557 to 1735 (GPAFEFAVAM…FSAALLKHYF (179 aa)) enclose the Peptidase C3 domain. Active-site for protease 3C activity residues include His1596, Glu1627, and Cys1703. Residues 1966–2082 (GHLIAFDYSG…SYPWPIDASL (117 aa)) form the RdRp catalytic domain. Residues Asp1972 and Asp2068 each coordinate Mg(2+).

Belongs to the picornaviruses polyprotein family. As to quaternary structure, interacts with capsid protein VP1 and capsid protein VP3 to form heterotrimeric protomers. In terms of assembly, interacts with capsid protein VP0, and capsid protein VP3 to form heterotrimeric protomers. Five protomers subsequently associate to form pentamers which serve as building blocks for the capsid. Interacts with capsid protein VP2, capsid protein VP3 and capsid protein VP4 following cleavage of capsid protein VP0. Interacts with host integrin heterodimer ITGAV/ITGB6. Interacts with capsid protein VP1 and capsid protein VP3 in the mature capsid. As to quaternary structure, interacts with capsid protein VP0 and capsid protein VP1 to form heterotrimeric protomers. Five protomers subsequently associate to form pentamers which serve as building blocks for the capsid. Interacts with capsid protein VP4 in the mature capsid. Interacts with protein 2C; this interaction may be important for virion morphogenesis. In terms of assembly, interacts with capsid protein VP1 and capsid protein VP3. Homodimer. As to quaternary structure, homohexamer; forms a hexameric ring structure with 6-fold symmetry characteristic of AAA+ ATPases. Interacts (via N-terminus) with host RTN3 (via reticulon domain); this interaction is important for viral replication. Interacts with capsid protein VP3; this interaction may be important for virion morphogenesis. In terms of assembly, interacts with protein 3CD. Homodimer. Interacts with host GBF1. Interacts (via GOLD domain) with host ACBD3 (via GOLD domain); this interaction allows the formation of a viral protein 3A/ACBD3 heterotetramer with a 2:2 stoichiometry, which will stimulate the recruitment of host PI4KB in order to synthesize PI4P at the viral RNA replication sites. As to quaternary structure, interacts with RNA-directed RNA polymerase. In terms of assembly, interacts with protein 3AB and with RNA-directed RNA polymerase. Interacts with Viral protein genome-linked and with protein 3CD. It depends on Mg(2+) as a cofactor. Specific enzymatic cleavages in vivo by the viral proteases yield processing intermediates and the mature proteins. In terms of processing, myristoylation is required for the formation of pentamers during virus assembly. Further assembly of 12 pentamers and a molecule of genomic RNA generates the provirion. Post-translationally, during virion maturation, immature virions are rendered infectious following cleavage of VP0 into VP4 and VP2. This maturation seems to be an autocatalytic event triggered by the presence of RNA in the capsid and it is followed by a conformational change infectious virion. Myristoylation is required during RNA encapsidation and formation of the mature virus particle. In terms of processing, VPg is uridylylated by the polymerase into VPg-pUpU. This acts as a nucleotide-peptide primer for the genomic RNA replication.

It is found in the virion. It localises to the host cytoplasm. Its subcellular location is the host cytoplasmic vesicle membrane. The protein localises to the host nucleus. It catalyses the reaction a ribonucleoside 5'-triphosphate + H2O = a ribonucleoside 5'-diphosphate + phosphate + H(+). The enzyme catalyses Selective cleavage of Tyr-|-Gly bond in the picornavirus polyprotein.. It carries out the reaction RNA(n) + a ribonucleoside 5'-triphosphate = RNA(n+1) + diphosphate. The catalysed reaction is Selective cleavage of Gln-|-Gly bond in the poliovirus polyprotein. In other picornavirus reactions Glu may be substituted for Gln, and Ser or Thr for Gly.. Its activity is regulated as follows. Replication or transcription is subject to high level of random mutations by the nucleotide analog ribavirin. In terms of biological role, forms an icosahedral capsid of pseudo T=3 symmetry with capsid proteins VP2 and VP3. The capsid is 300 Angstroms in diameter, composed of 60 copies of each capsid protein and enclosing the viral positive strand RNA genome. Capsid protein VP1 mainly forms the vertices of the capsid. Capsid protein VP1 interacts with host integrin ITGAV/ITGB6 to provide virion attachment to target host cells. This attachment induces virion internalization. Tyrosine kinases are probably involved in the entry process. After binding to its receptor, the capsid undergoes conformational changes. Capsid protein VP1 N-terminus (that contains an amphipathic alpha-helix) and capsid protein VP4 are externalized. Together, they shape a pore in the host membrane through which viral genome is translocated to host cell cytoplasm. Forms an icosahedral capsid of pseudo T=3 symmetry with capsid proteins VP2 and VP3. The capsid is 300 Angstroms in diameter, composed of 60 copies of each capsid protein and enclosing the viral positive strand RNA genome. Functionally, lies on the inner surface of the capsid shell. After binding to the host receptor, the capsid undergoes conformational changes. Capsid protein VP4 is released, Capsid protein VP1 N-terminus is externalized, and together, they shape a pore in the host membrane through which the viral genome is translocated into the host cell cytoplasm. Its function is as follows. Component of immature procapsids, which is cleaved into capsid proteins VP4 and VP2 after maturation. Allows the capsid to remain inactive before the maturation step. In terms of biological role, cysteine protease that cleaves viral polyprotein and specific host proteins. It is responsible for the autocatalytic cleavage between the P1 and P2 regions, which is the first cleavage occurring in the polyprotein. Also cleaves the host translation initiation factor EIF4G1, in order to shut down the capped cellular mRNA translation. Inhibits the host nucleus-cytoplasm protein and RNA trafficking by cleaving host members of the nuclear pores. Counteracts stress granule formation probably by antagonizing its assembly or promoting its dissassembly. Cleaves and inhibits host IFIH1/MDA5, thereby inhibiting the type-I IFN production and the establishment of the antiviral state. Cleaves and inhibits host MAVS, thereby inhibiting the type-I IFN production and the establishment of the antiviral state. Plays an essential role in the virus replication cycle by acting as a viroporin. Creates a pore in the host endoplasmic reticulum and as a consequence releases Ca2+ in the cytoplasm of infected cell. In turn, high levels of cytoplasmic calcium may trigger membrane trafficking and transport of viral ER-associated proteins to viroplasms, sites of viral genome replication. Functionally, induces and associates with structural rearrangements of intracellular membranes. Displays RNA-binding, nucleotide binding and NTPase activities. May play a role in virion morphogenesis and viral RNA encapsidation by interacting with the capsid protein VP3. Its function is as follows. Localizes the viral replication complex to the surface of membranous vesicles. Together with protein 3CD binds the Cis-Active RNA Element (CRE) which is involved in RNA synthesis initiation. Acts as a cofactor to stimulate the activity of 3D polymerase, maybe through a nucleid acid chaperone activity. In terms of biological role, localizes the viral replication complex to the surface of membranous vesicles. It inhibits host cell endoplasmic reticulum-to-Golgi apparatus transport and causes the disassembly of the Golgi complex, possibly through GBF1 interaction. This would result in depletion of MHC, trail receptors and IFN receptors at the host cell surface. Plays an essential role in viral RNA replication by recruiting ACBD3 and PI4KB at the viral replication sites, thereby allowing the formation of the rearranged membranous structures where viral replication takes place. Acts as a primer for viral RNA replication and remains covalently bound to viral genomic RNA. VPg is uridylylated prior to priming replication into VPg-pUpU. The oriI viral genomic sequence may act as a template for this. The VPg-pUpU is then used as primer on the genomic RNA poly(A) by the RNA-dependent RNA polymerase to replicate the viral genome. During genome replication, the VPg-RNA linkage is removed by the host TDP2, thereby accelerating replication. During the late stage of the replication cycle, host TDP2 is excluded from sites of viral RNA synthesis and encapsidation, allowing for the generation of progeny virions. Functionally, involved in the viral replication complex and viral polypeptide maturation. It exhibits protease activity with a specificity and catalytic efficiency that is different from protease 3C. Protein 3CD lacks polymerase activity. Protein 3CD binds to the 5'UTR of the viral genome. Its function is as follows. Replicates the viral genomic RNA on the surface of intracellular membranes. May form linear arrays of subunits that propagate along a strong head-to-tail interaction called interface-I. Covalently attaches UMP to a tyrosine of VPg, which is used to prime RNA synthesis. The positive stranded RNA genome is first replicated at virus induced membranous vesicles, creating a dsRNA genomic replication form. This dsRNA is then used as template to synthesize positive stranded RNA genomes. ss(+)RNA genomes are either translated, replicated or encapsidated. In terms of biological role, major viral protease that mediates proteolytic processing of the polyprotein. Cleaves host EIF5B, contributing to host translation shutoff. Also cleaves host PABPC1, contributing to host translation shutoff. Cleaves host NLRP1, triggers host N-glycine-mediated degradation of the autoinhibitory NLRP1 N-terminal fragment. The chain is Genome polyprotein from Coxsackievirus A9 (strain Griggs).